A 433-amino-acid chain; its full sequence is Acetyl-CoA-benzylalcohol acetyltransferase (433 aa).

Residues histidine 152 and aspartate 377 each act as proton acceptor in the active site.

It belongs to the plant acyltransferase family. In terms of processing, the N-terminus is blocked. In terms of tissue distribution, expressed in petals, style, sepals and stamens. Very low expression in stigma and not detected in leaves.

It catalyses the reaction benzyl alcohol + acetyl-CoA = benzyl acetate + CoA. The enzyme catalyses (E)-cinnamyl alcohol + acetyl-CoA = (E)-cinnamyl acetate + CoA. In terms of biological role, involved in the biosynthesis of benzyl acetate, a major constituent of the floral scent. Can use benzylalcohol, cinnamylalcohol, 3-cis-hexene-1-ol or heptanol as substrates. Has some activity with 2-phenylethanol and 2-naphtalene-ethanol, but no activity with linalool, 2-hydroxybenzylalcohol, 3-hydroxybenzylalcohol or 4-hydroxybenzylalcohol. This chain is Acetyl-CoA-benzylalcohol acetyltransferase (BEAT), found in Clarkia breweri (Fairy fans).